We begin with the raw amino-acid sequence, 761 residues long: 5-methyltetrahydropteroyltriglutamate--homocysteine methyltransferase (761 aa).

5-methyltetrahydropteroyltri-L-glutamate contacts are provided by residues 16–19 and lysine 116; that span reads RELK. L-homocysteine contacts are provided by residues 435-437 and glutamate 488; that span reads IGS. L-methionine is bound by residues 435–437 and glutamate 488; that span reads IGS. 5-methyltetrahydropteroyltri-L-glutamate contacts are provided by residues 519–520 and tryptophan 565; that span reads RC. An L-homocysteine-binding site is contributed by aspartate 603. Residue aspartate 603 participates in L-methionine binding. A 5-methyltetrahydropteroyltri-L-glutamate-binding site is contributed by glutamate 609. Positions 645, 647, and 669 each coordinate Zn(2+). The active-site Proton donor is histidine 698. Cysteine 730 serves as a coordination point for Zn(2+).

This sequence belongs to the vitamin-B12 independent methionine synthase family. Requires Zn(2+) as cofactor.

The catalysed reaction is 5-methyltetrahydropteroyltri-L-glutamate + L-homocysteine = tetrahydropteroyltri-L-glutamate + L-methionine. Its pathway is amino-acid biosynthesis; L-methionine biosynthesis via de novo pathway; L-methionine from L-homocysteine (MetE route): step 1/1. Catalyzes the transfer of a methyl group from 5-methyltetrahydrofolate to homocysteine resulting in methionine formation. The protein is 5-methyltetrahydropteroyltriglutamate--homocysteine methyltransferase of Hahella chejuensis (strain KCTC 2396).